We begin with the raw amino-acid sequence, 263 residues long: Granzyme K (263 aa).

A signal peptide spans 1-21; sequence MRFSSWALVSLVAGVYMSSEC. A propeptide spans 22–25 (activation peptide); the sequence is FHTE. A Peptidase S1 domain is found at 26 to 258; sequence IIGGREVQPH…YQTWIKSKLA (233 aa). Cysteines 51 and 67 form a disulfide. Active-site charge relay system residues include His-66 and Asp-115. Intrachain disulfides connect Cys-148–Cys-219, Cys-180–Cys-198, and Cys-209–Cys-233. Ser-213 functions as the Charge relay system in the catalytic mechanism.

It belongs to the peptidase S1 family. Granzyme subfamily.

The protein localises to the cytoplasmic granule. The polypeptide is Granzyme K (Gzmk) (Mus musculus (Mouse)).